We begin with the raw amino-acid sequence, 247 residues long: Protein GrpE (247 aa).

2 disordered regions span residues 1–68 (MKKN…KNDD) and 226–247 (PAEK…KNEN). Basic and acidic residues-rich tracts occupy residues 7–35 (KHAD…KDEQ), 43–54 (TSKENPQEDKAE), and 228–247 (EKQD…KNEN).

It belongs to the GrpE family. As to quaternary structure, homodimer.

The protein resides in the cytoplasm. In terms of biological role, participates actively in the response to hyperosmotic and heat shock by preventing the aggregation of stress-denatured proteins, in association with DnaK and GrpE. It is the nucleotide exchange factor for DnaK and may function as a thermosensor. Unfolded proteins bind initially to DnaJ; upon interaction with the DnaJ-bound protein, DnaK hydrolyzes its bound ATP, resulting in the formation of a stable complex. GrpE releases ADP from DnaK; ATP binding to DnaK triggers the release of the substrate protein, thus completing the reaction cycle. Several rounds of ATP-dependent interactions between DnaJ, DnaK and GrpE are required for fully efficient folding. The polypeptide is Protein GrpE (Treponema denticola (strain ATCC 35405 / DSM 14222 / CIP 103919 / JCM 8153 / KCTC 15104)).